We begin with the raw amino-acid sequence, 461 residues long: 26S proteasome regulatory subunit 8 (461 aa).

185-192 (GPPGTGKT) is a binding site for ATP.

This sequence belongs to the AAA ATPase family.

It is found in the cytoplasm. The protein localises to the nucleus. The 26S proteasome is involved in the ATP-dependent degradation of ubiquitinated proteins. The regulatory (or ATPase) complex confers ATP dependency and substrate specificity to the 26S complex. This Xenopus laevis (African clawed frog) protein is 26S proteasome regulatory subunit 8 (psmc5).